The primary structure comprises 176 residues: ATP-dependent protease subunit HslV (176 aa).

Thr-5 is a catalytic residue. Residues Ser-161, Cys-164, and Thr-167 each coordinate Na(+).

The protein belongs to the peptidase T1B family. HslV subfamily. As to quaternary structure, a double ring-shaped homohexamer of HslV is capped on each side by a ring-shaped HslU homohexamer. The assembly of the HslU/HslV complex is dependent on binding of ATP.

The protein localises to the cytoplasm. The enzyme catalyses ATP-dependent cleavage of peptide bonds with broad specificity.. Allosterically activated by HslU binding. In terms of biological role, protease subunit of a proteasome-like degradation complex believed to be a general protein degrading machinery. The protein is ATP-dependent protease subunit HslV of Caldanaerobacter subterraneus subsp. tengcongensis (strain DSM 15242 / JCM 11007 / NBRC 100824 / MB4) (Thermoanaerobacter tengcongensis).